A 213-amino-acid polypeptide reads, in one-letter code: Orotate phosphoribosyltransferase (213 aa).

Residue K26 participates in 5-phospho-alpha-D-ribose 1-diphosphate binding. 34–35 is an orotate binding site; sequence FF. Residues 72 to 73, R99, K100, K103, H105, and 124 to 132 contribute to the 5-phospho-alpha-D-ribose 1-diphosphate site; these read YK and DDVITAGTA. Orotate-binding residues include T128 and R156.

It belongs to the purine/pyrimidine phosphoribosyltransferase family. PyrE subfamily. As to quaternary structure, homodimer. Mg(2+) serves as cofactor.

The enzyme catalyses orotidine 5'-phosphate + diphosphate = orotate + 5-phospho-alpha-D-ribose 1-diphosphate. It participates in pyrimidine metabolism; UMP biosynthesis via de novo pathway; UMP from orotate: step 1/2. Functionally, catalyzes the transfer of a ribosyl phosphate group from 5-phosphoribose 1-diphosphate to orotate, leading to the formation of orotidine monophosphate (OMP). This chain is Orotate phosphoribosyltransferase, found in Haemophilus ducreyi (strain 35000HP / ATCC 700724).